The primary structure comprises 494 residues: ETS translocation variant 4 (494 aa).

Disordered regions lie at residues 82 to 113 and 139 to 201; these read ENSVAFHSPPVKIKKEPQSPGSDPSQSCSHKQ and AGGS…SGSA. Positions 100-113 are enriched in polar residues; it reads SPGSDPSQSCSHKQ. A compositionally biased stretch (low complexity) spans 176–187; it reads SSSQSHACHSHS. A compositionally biased stretch (polar residues) spans 188–197; the sequence is YPMNPSSRFP. The segment at residues 350-430 is a DNA-binding region (ETS); that stretch reads LQLWQFLVAL…AGERYVYKFV (81 aa).

It belongs to the ETS family. Post-translationally, phosphorylated. In terms of tissue distribution, in the embryo, expressed ubiquitously until the late blastula stage, in the marginal zone of gastrula stages, in the presumptive forebrain and hindbrain and in the trunk region of early somite stages. In later stages, also expressed in Rohon-Beard neurons, epiphysis, lateral line placodes, pectoral fin buds, developing lens and heart.

Its subcellular location is the nucleus. Functionally, transcriptional activator that binds to the (5'-CCGGA[AT]-3') motif. May control the acquisition of specific cell fates at an early stage during development of the somites and nervous system. May mediate the cellular effects of the fibroblast growth factors on embryogenesis. This chain is ETS translocation variant 4 (etv4), found in Danio rerio (Zebrafish).